The primary structure comprises 191 residues: Flagellar transcriptional regulator FlhC (191 aa).

Zn(2+) is bound by residues cysteine 137, cysteine 140, cysteine 157, and cysteine 160.

The protein belongs to the FlhC family. Heterohexamer composed of two FlhC and four FlhD subunits. Each FlhC binds a FlhD dimer, forming a heterotrimer, and a hexamer assembles by dimerization of two heterotrimers. Requires Zn(2+) as cofactor.

The protein localises to the cytoplasm. Functions in complex with FlhD as a master transcriptional regulator that regulates transcription of several flagellar and non-flagellar operons by binding to their promoter region. Activates expression of class 2 flagellar genes, including fliA, which is a flagellum-specific sigma factor that turns on the class 3 genes. Also regulates genes whose products function in a variety of physiological pathways. The polypeptide is Flagellar transcriptional regulator FlhC (Nitrosomonas eutropha (strain DSM 101675 / C91 / Nm57)).